A 93-amino-acid polypeptide reads, in one-letter code: uncharacterized protein (93 aa).

An N-terminal signal peptide occupies residues 1-22; the sequence is MSIPNLSSVTQLLSIATGLVST. An N-linked (GlcNAc...) asparagine; by host glycan is attached at Asn5.

This is an uncharacterized protein from Invertebrate iridescent virus 6 (IIV-6).